A 455-amino-acid chain; its full sequence is Acid sphingomyelinase-like phosphodiesterase 3b (455 aa).

Positions 1–18 are cleaved as a signal peptide; it reads MRLLAWLIFLANWGGARA. 2 residues coordinate Zn(2+): D28 and H30. A disulfide bridge links C45 with C64. N72 carries an N-linked (GlcNAc...) asparagine glycan. Zn(2+) is bound by residues D93 and N134. The N-linked (GlcNAc...) asparagine glycan is linked to N164. Zn(2+) contacts are provided by H236, H277, and H279. N-linked (GlcNAc...) asparagine glycosylation occurs at N343. Cystine bridges form between C405–C409 and C415–C428.

Belongs to the acid sphingomyelinase family. In terms of assembly, interacts with TLR4, TLR7, TLR8 and TLR9. Requires Zn(2+) as cofactor. Post-translationally, N-glycosylated.

The protein resides in the secreted. The protein localises to the cell membrane. Lipid-modulating phosphodiesterase. Active on the surface of macrophages and dendritic cells and strongly influences macrophage lipid composition and membrane fluidity. Acts as a negative regulator of Toll-like receptor signaling. Has in vitro phosphodiesterase activity, but the physiological substrate is unknown. Lacks activity with phosphocholine-containing lipids, but can cleave CDP-choline, and can release phosphate from ATP and ADP (in vitro). This chain is Acid sphingomyelinase-like phosphodiesterase 3b (SMPDL3B), found in Homo sapiens (Human).